The chain runs to 123 residues: uncharacterized protein (123 aa).

The helical transmembrane segment at 14-34 threads the bilayer; sequence VVLKITAVVCSVFSIRVLILA.

Its subcellular location is the membrane. This is an uncharacterized protein from Saccharomyces cerevisiae (strain ATCC 204508 / S288c) (Baker's yeast).